Here is a 227-residue protein sequence, read N- to C-terminus: Glutathione S-transferase U7 (227 aa).

Residues 8–87 (EEVKLLGMWA…YIDETWRDNP (80 aa)) enclose the GST N-terminal domain. Glutathione contacts are provided by residues 18–19 (SP), 44–45 (NK), 58–59 (MI), and 71–72 (ES). The region spanning 92-215 (DPYERTMARF…PPEDEHLKYI (124 aa)) is the GST C-terminal domain.

It belongs to the GST superfamily. Tau family.

Its subcellular location is the cytoplasm. It is found in the cytosol. It catalyses the reaction RX + glutathione = an S-substituted glutathione + a halide anion + H(+). Functionally, may be involved in the conjugation of reduced glutathione to a wide number of exogenous and endogenous hydrophobic electrophiles and have a detoxification role against certain herbicides. This chain is Glutathione S-transferase U7 (GSTU7), found in Arabidopsis thaliana (Mouse-ear cress).